A 1307-amino-acid chain; its full sequence is Rho1 guanine nucleotide exchange factor TUS1 (1307 aa).

Polar residues predominate over residues 1 to 10; sequence MYRYNRSSPF. Disordered regions lie at residues 1–144, 164–194, and 219–239; these read MYRY…FIGN, PFAN…SDLR, and EDSE…NVSG. The span at 12 to 29 shows a compositional bias: basic and acidic residues; the sequence is RTPEKRVSRQESQRKSIE. Positions 37 to 79 are enriched in polar residues; it reads NTRNSFLDDSDNGTDNISIGWTPISDTQQFQSPVPQAFTFTSK. Over residues 87–97 the composition is skewed to low complexity; it reads TSSSESTPKST. The span at 176 to 194 shows a compositional bias: basic and acidic residues; sequence SPRDSSKQQAHFSDESDLR. The 191-residue stretch at 467–657 folds into the DH domain; that stretch reads QRQSFIFDLI…EKLNFEVNQV (191 aa). The PH domain occupies 715–877; the sequence is KLVLSGTVYK…WIDAIMESFK (163 aa). The tract at residues 780–802 is disordered; that stretch reads TSKQPLRNYSQKEHKSPMHNFST. The region spanning 938–1279 is the CNH domain; sequence TTRILCCEDV…KLASSERREK (342 aa).

Interacts with RHO1.

In terms of biological role, guanine nucleotide-exchange factor (GEF) for RHO1 that stimulates the exchange of RHO1 GDP-bound form into GTP-bound form. Required for signaling of cell wall defects to RHO1. The sequence is that of Rho1 guanine nucleotide exchange factor TUS1 (TUS1) from Saccharomyces cerevisiae (strain ATCC 204508 / S288c) (Baker's yeast).